The primary structure comprises 72 residues: DNA-directed RNA polymerase subunit omega (72 aa).

It belongs to the RNA polymerase subunit omega family. As to quaternary structure, the RNAP catalytic core consists of 2 alpha, 1 beta, 1 beta' and 1 omega subunit. When a sigma factor is associated with the core the holoenzyme is formed, which can initiate transcription.

It catalyses the reaction RNA(n) + a ribonucleoside 5'-triphosphate = RNA(n+1) + diphosphate. Functionally, promotes RNA polymerase assembly. Latches the N- and C-terminal regions of the beta' subunit thereby facilitating its interaction with the beta and alpha subunits. The sequence is that of DNA-directed RNA polymerase subunit omega from Clostridium acetobutylicum (strain ATCC 824 / DSM 792 / JCM 1419 / IAM 19013 / LMG 5710 / NBRC 13948 / NRRL B-527 / VKM B-1787 / 2291 / W).